The sequence spans 376 residues: Transmembrane protein 43 homolog (376 aa).

At 1-10 the chain is on the cytoplasmic side; sequence MASLSETLRS. A helical membrane pass occupies residues 11 to 31; the sequence is HWPIALFGVILFVAGGTELYW. Residues 32–277 lie on the Lumenal side of the membrane; it reads NEGRAVHNMM…EVFRLEARAQ (246 aa). A helical membrane pass occupies residues 278–298; that stretch reads VLHTWWWRFVGWLLIFFGVTC. At 299 to 323 the chain is on the cytoplasmic side; that stretch reads NTKILRLLFVRVPLLVALAPDPQFP. 2 consecutive transmembrane segments (helical) span residues 324 to 344 and 345 to 365; these read VTGNLLIAFSLALTIAAVAWI and LHRPVIGACLLLAGASPYVWF. The Cytoplasmic segment spans residues 366-376; sequence TRNLVDYHRLD.

Belongs to the TMEM43 family.

It is found in the endoplasmic reticulum membrane. The protein localises to the nucleus envelope. Involved in lipid metabolism and utilization. This chain is Transmembrane protein 43 homolog, found in Drosophila melanogaster (Fruit fly).